Here is an 87-residue protein sequence, read N- to C-terminus: U3-theraphotoxin-Hhn1a 7 (87 aa).

An N-terminal signal peptide occupies residues 1 to 24; the sequence is MVNMKASMFLTFAGLVLLFVVSYA. Positions 25–52 are excised as a propeptide; that stretch reads SESEEKEFPKEMLSSIFAVDNDFKQEER. Disulfide bonds link C54/C67, C61/C72, and C66/C79.

The protein belongs to the neurotoxin 10 (Hwtx-1) family. 51 (Hntx-8) subfamily. Hntx-8 sub-subfamily. As to expression, expressed by the venom gland.

Its subcellular location is the secreted. In terms of biological role, ion channel inhibitor. In Cyriopagopus hainanus (Chinese bird spider), this protein is U3-theraphotoxin-Hhn1a 7.